Reading from the N-terminus, the 175-residue chain is Large ribosomal subunit protein uL10 (175 aa).

The protein belongs to the universal ribosomal protein uL10 family. As to quaternary structure, part of the ribosomal stalk of the 50S ribosomal subunit. The N-terminus interacts with L11 and the large rRNA to form the base of the stalk. The C-terminus forms an elongated spine to which L12 dimers bind in a sequential fashion forming a multimeric L10(L12)X complex.

In terms of biological role, forms part of the ribosomal stalk, playing a central role in the interaction of the ribosome with GTP-bound translation factors. The protein is Large ribosomal subunit protein uL10 of Prochlorococcus marinus (strain NATL1A).